Reading from the N-terminus, the 431-residue chain is Citrate synthase 1 (431 aa).

Active-site residues include His-309 and Asp-366.

The protein belongs to the citrate synthase family. Homohexamer.

The catalysed reaction is oxaloacetate + acetyl-CoA + H2O = citrate + CoA + H(+). It participates in carbohydrate metabolism; tricarboxylic acid cycle; isocitrate from oxaloacetate: step 1/2. The protein is Citrate synthase 1 (gltA2) of Mycobacterium tuberculosis (strain CDC 1551 / Oshkosh).